Here is a 186-residue protein sequence, read N- to C-terminus: ATP synthase subunit delta (186 aa).

Belongs to the ATPase delta chain family. F-type ATPases have 2 components, F(1) - the catalytic core - and F(0) - the membrane proton channel. F(1) has five subunits: alpha(3), beta(3), gamma(1), delta(1), epsilon(1). F(0) has three main subunits: a(1), b(2) and c(10-14). The alpha and beta chains form an alternating ring which encloses part of the gamma chain. F(1) is attached to F(0) by a central stalk formed by the gamma and epsilon chains, while a peripheral stalk is formed by the delta and b chains.

Its subcellular location is the cell inner membrane. Its function is as follows. F(1)F(0) ATP synthase produces ATP from ADP in the presence of a proton or sodium gradient. F-type ATPases consist of two structural domains, F(1) containing the extramembraneous catalytic core and F(0) containing the membrane proton channel, linked together by a central stalk and a peripheral stalk. During catalysis, ATP synthesis in the catalytic domain of F(1) is coupled via a rotary mechanism of the central stalk subunits to proton translocation. This protein is part of the stalk that links CF(0) to CF(1). It either transmits conformational changes from CF(0) to CF(1) or is implicated in proton conduction. This is ATP synthase subunit delta from Mesorhizobium japonicum (strain LMG 29417 / CECT 9101 / MAFF 303099) (Mesorhizobium loti (strain MAFF 303099)).